Reading from the N-terminus, the 359-residue chain is sn-1 acyl-lipid omega-3 desaturase (ferredoxin) (359 aa).

The next 2 membrane-spanning stretches (helical) occupy residues 44–64 (LGYF…AAYL) and 67–87 (WFFY…LFVV). A Histidine box-1 motif is present at residues 89–93 (HDCGH). Residues 125-129 (HRTHH) carry the Histidine box-2 motif. 3 consecutive transmembrane segments (helical) span residues 153–173 (AWYE…IYLF), 206–226 (LAAF…LFLL), and 228–248 (FYVA…FLHH). Positions 291–295 (HHIFS) match the Histidine box-3 motif.

It belongs to the fatty acid desaturase type 2 family. Fe(2+) serves as cofactor.

The protein resides in the membrane. The catalysed reaction is a 1-[(9Z,12Z)-octadecdienoyl]-2-acyl-glycerolipid + 2 reduced [2Fe-2S]-[ferredoxin] + O2 + 2 H(+) = a 1-[(9Z,12Z,15Z)-octadectrienoyl]-2-acyl-glycerolipid + 2 oxidized [2Fe-2S]-[ferredoxin] + 2 H2O. It catalyses the reaction a 1-[(6Z,9Z,12Z)-octadectrienoyl]-2-acyl-glycerolipid + 2 reduced [2Fe-2S]-[ferredoxin] + O2 + 2 H(+) = a 1-[(6Z,9Z,12Z,15Z)-octadectetraenoyl]-2-acyl-glycerolipid + 2 oxidized [2Fe-2S]-[ferredoxin] + 2 H2O. It functions in the pathway lipid metabolism; polyunsaturated fatty acid biosynthesis. Desaturase involved in fatty acid biosynthesis. Introduces a double bond at carbon 15 of linoleoyl and gamma-linolenoyl groups attached to the sn-1 position of the glycerol moiety of membrane glycerolipids. In Synechocystis sp. (strain ATCC 27184 / PCC 6803 / Kazusa), this protein is sn-1 acyl-lipid omega-3 desaturase (ferredoxin).